The sequence spans 80 residues: Exodeoxyribonuclease 7 small subunit (80 aa).

Belongs to the XseB family. As to quaternary structure, heterooligomer composed of large and small subunits.

Its subcellular location is the cytoplasm. It carries out the reaction Exonucleolytic cleavage in either 5'- to 3'- or 3'- to 5'-direction to yield nucleoside 5'-phosphates.. Its function is as follows. Bidirectionally degrades single-stranded DNA into large acid-insoluble oligonucleotides, which are then degraded further into small acid-soluble oligonucleotides. This chain is Exodeoxyribonuclease 7 small subunit, found in Marinomonas sp. (strain MWYL1).